The chain runs to 1035 residues: MQDPDGIDINTKIFNSVAEVFQKAQGSYAGHRKHIAVLKKIQSKAVEQGYEDAFNFWFDKLVTKILPLKKNEIIGDRIVKLVAAFIASLERELILAKKQNYKLTNDEEGIFSRFVDQFIRHVLRGVESPDKNVRFRVLQLLAVIMDNIGEIDESLFNLLILSLNKRIYDREPTVRIQAVFCLTKFQDEEQTEHLTELSDNEENFEATRTLVASIQNDPSAEVRRAAMLNLINDNNTRPYILERARDVNIVNRRLVYSRILKSMGRKCFDDIEPHIFDQLIEWGLEDRELSVRNACKRLIAHDWLNALDGDLIELLEKLDVSRSSVCVKAIEALFQSRPDILSKIKFPESIWKDFTVEIAFLFRAIYLYCLDNNITEMLEENFPEASKLSEHLNHYILLRYHHNDISNDSQSHFDYNTLEFIIEQLSIAAERYDYSDEVGRRSMLTVVRNMLALTTLSEPLIKIGIRVMKSLSINEKDFVTMAIEIINDIRDDDIEKQEQEEKIKSKKINRRNETSVDEEDENGTHNDEVNEDEEDDNISSFHSAVENLVQGNGNVSESDIINNLPPEKEASSATIVLCLTRSSYMLELVNTPLTENILIASLMDTLITPAVRNTAPNIRELGVKNLGLCCLLDVKLAIDNMYILGMCVSKGNASLKYIALQVIVDIFSVHGNTVVDGEGKVDSISLHKIFYKVLKNNGLPECQVIAAEGLCKLFLADVFTDDDLFETLVLSYFSPINSSNEALVQAFAFCIPVYCFSHPAHQQRMSRTAADILLRLCVLWDDLQSSVIPEVDREAMLKPNIIFQQLLFWTDPRNLVNQTGSTKKDTVQLTFLIDVLKIYAQIEKKEIKKMIITNINAIFLSSEQDYSTLKELLEYSDDIAENDNLDNVSKNALDKLRNNLNSLIEEINERSETQTKDENNTANDQYSSILGNSFNKSSNDTIEHAADITDGNNTELTKTTVNISAVDNTTEQSNSRKRTRSEAEQIDTSKNLENMSIQDTSTVAKNVSFVLPDEKSDAMSIDEEDKDSESFSEVC.

HEAT repeat units lie at residues 113–150 and 153–191; these read RFVDQFIRHVLRGVESPDKNVRFRVLQLLAVIMDNIGE and ESLFNLLILSLNKRIYDREPTVRIQAVFCLTKFQDEEQT. Residue S198 is modified to Phosphoserine. Residues 201-239 form an HEAT 3 repeat; that stretch reads EENFEATRTLVASIQNDPSAEVRRAAMLNLINDNNTRPY. The tract at residues 500–536 is disordered; that stretch reads EEKIKSKKINRRNETSVDEEDENGTHNDEVNEDEEDD. 2 HEAT repeats span residues 597 to 635 and 827 to 864; these read ILIASLMDTLITPAVRNTAPNIRELGVKNLGLCCLLDVK and VQLTFLIDVLKIYAQIEKKEIKKMIITNINAIFLSSEQ. The segment covering 909-919 has biased composition (basic and acidic residues); it reads ERSETQTKDEN. 2 disordered regions span residues 909–934 and 959–995; these read ERSETQTKDENNTANDQYSSILGNSF and TTVNISAVDNTTEQSNSRKRTRSEAEQIDTSKNLENM. 2 stretches are compositionally biased toward polar residues: residues 920-934 and 959-973; these read NTANDQYSSILGNSF and TTVNISAVDNTTEQS. Position 933 is a phosphoserine (S933). Residue S981 is modified to Phosphoserine. Polar residues predominate over residues 986-995; sequence IDTSKNLENM. S1008 bears the Phosphoserine mark. Positions 1012–1035 are disordered; that stretch reads PDEKSDAMSIDEEDKDSESFSEVC.

It belongs to the CND3 (condensin subunit 3) family. In terms of assembly, component of the condensin complex, which contains the SMC2 and SMC4 heterodimer, and three non SMC subunits that probably regulate the complex: BRN1, YCS4 and YCG1/YCS5.

It localises to the nucleus. The protein resides in the cytoplasm. The protein localises to the chromosome. In terms of biological role, regulatory subunit of the condensin complex, a complex required for conversion of interphase chromatin into mitotic-like condense chromosomes. The condensin complex probably introduces positive supercoils into relaxed DNA in the presence of type I topoisomerases and converts nicked DNA into positive knotted forms in the presence of type II topoisomerases. The condensin complex probably also plays a role during interphase. In Saccharomyces cerevisiae (strain ATCC 204508 / S288c) (Baker's yeast), this protein is Condensin complex subunit 3 (YCG1).